A 356-amino-acid chain; its full sequence is Phosphate acyltransferase (356 aa).

This sequence belongs to the PlsX family. In terms of assembly, homodimer. Probably interacts with PlsY.

It is found in the cytoplasm. It carries out the reaction a fatty acyl-[ACP] + phosphate = an acyl phosphate + holo-[ACP]. Its pathway is lipid metabolism; phospholipid metabolism. Its function is as follows. Catalyzes the reversible formation of acyl-phosphate (acyl-PO(4)) from acyl-[acyl-carrier-protein] (acyl-ACP). This enzyme utilizes acyl-ACP as fatty acyl donor, but not acyl-CoA. In Bartonella henselae (strain ATCC 49882 / DSM 28221 / CCUG 30454 / Houston 1) (Rochalimaea henselae), this protein is Phosphate acyltransferase.